A 241-amino-acid chain; its full sequence is MVKAVIFTDFDGTVTLEDSNDYLTDTLGFGKEKRLKVFEGVLDDTKSFRQGFMEMLESIHTPFPECIKILEKKIRLDPGFKDTFEWAQENDVPVIVVSSGMKPIIKVLLTRLVGQESIHKIDIVSNEVEIDAHDQWKIIYKDESPFGHDKSRSIDAYKKKFESTLKAGEQRPVYFYCGDGVSDLSAAKECDLLFAKRGKDLVTYCKKQNVPFHEFDTFKDILASMKQVLAGEKTVAELMEN.

D9 serves as the catalytic Nucleophile. Mg(2+) is bound by residues D9, D11, and D179. The active-site Proton donor is D11.

It belongs to the HAD-like hydrolase superfamily. Requires Mg(2+) as cofactor.

The protein localises to the cytoplasm. It is found in the nucleus. The catalysed reaction is D-ribitol 5-phosphate + H2O = ribitol + phosphate. It catalyses the reaction D-sorbitol 6-phosphate + H2O = D-sorbitol + phosphate. It carries out the reaction sn-glycerol 1-phosphate + H2O = glycerol + phosphate. The enzyme catalyses D-erythrose 4-phosphate + H2O = D-erythrose + phosphate. Hydrolyzes sugar alcohol (polyol) phosphates. Dephosphorylates a variety of substrates, including: sn-glycerol 1-phosphate (D-glycerol 3-phosphate), D-ribitol 5-phosphate, D-sorbitol 6-phosphate (D-glucitol 6-phosphate), and D-erythrose 4-phosphate. Prevents accumulation of toxic levels of polyol phosphates, which can impair glycolysis by inhibiting glucose-6-phosphate isomerase. The protein is Polyol phosphate phosphatase PYP1 of Saccharomyces cerevisiae (strain ATCC 204508 / S288c) (Baker's yeast).